A 609-amino-acid polypeptide reads, in one-letter code: Phosphoenolpyruvate carboxykinase [GTP] (609 aa).

Residues Arg-81 and 220 to 222 (YGG) contribute to the substrate site. Mn(2+)-binding residues include Lys-229 and His-249. Ser-271 lines the substrate pocket. GTP is bound at residue 272-277 (ACGKTN). Residue Cys-273 is part of the active site. Asp-296 is a binding site for Mn(2+). 387-389 (NSR) lines the substrate pocket. Residues Arg-389, Arg-420, and 515 to 518 (FGEN) contribute to the GTP site.

The protein belongs to the phosphoenolpyruvate carboxykinase [GTP] family. Monomer. Requires Mn(2+) as cofactor.

It is found in the cytoplasm. The catalysed reaction is oxaloacetate + GTP = phosphoenolpyruvate + GDP + CO2. Its pathway is carbohydrate biosynthesis; gluconeogenesis. Functionally, catalyzes the conversion of oxaloacetate (OAA) to phosphoenolpyruvate (PEP), the rate-limiting step in the metabolic pathway that produces glucose from lactate and other precursors derived from the citric acid cycle. This Mycobacterium leprae (strain Br4923) protein is Phosphoenolpyruvate carboxykinase [GTP].